A 419-amino-acid polypeptide reads, in one-letter code: O-antigen ligase (419 aa).

Residues 1–19 (MLTSFKLHSLKPYTLKSSM) are Cytoplasmic-facing. Residues 20-38 (ILEIITYILCFFSMIIAFV) form a helical membrane-spanning segment. Over 39-43 (DNTFS) the chain is Periplasmic. Residues 44-61 (IKIYNITAIVCLLSLILR) form a helical membrane-spanning segment. The Cytoplasmic segment spans residues 62 to 71 (GRQENYNIKN). Residues 72-91 (LILPLSIFLIGLLDLIWYSA) traverse the membrane as a helical segment. Topologically, residues 92–107 (FKVDNSPFRATYHSYL) are periplasmic. A helical membrane pass occupies residues 108–125 (NTAKIFIFGSFIVFLTLT). Residues 126 to 134 (SQLKSKKES) are Cytoplasmic-facing. The helical transmembrane segment at 135–153 (VLYTLYSLSFLIAGYAMYI) threads the bilayer. Residues 154 to 167 (NSIHENDRISFGVG) lie on the Periplasmic side of the membrane. Residues 168–187 (TATGAAYSTMLIGIVSGVAI) traverse the membrane as a helical segment. The Cytoplasmic segment spans residues 188-194 (LYTKKNH). Residues 195-211 (PFLFLLNSCAVLYVLAL) form a helical membrane-spanning segment. Topologically, residues 212–216 (TQTRA) are periplasmic. The helical transmembrane segment at 217-234 (TLLLFPIICVAALIAYYN) threads the bilayer. Residues 235–240 (KSPKKF) are Cytoplasmic-facing. Residues 241–259 (TSSIVLLIAILASIVIIFN) traverse the membrane as a helical segment. The Periplasmic portion of the chain corresponds to 260–348 (KPIQNRYNEA…NEIIEAGSLK (89 aa)). A helical transmembrane segment spans residues 349–367 (GLMGIFSTLFLYFSLFYIA). Residues 368–372 (YKKRA) lie on the Cytoplasmic side of the membrane. The chain crosses the membrane as a helical span at residues 373–391 (LGLLILTLGIVGIGLSDVI). Over 392–396 (IWARS) the chain is Periplasmic. A helical transmembrane segment spans residues 397 to 412 (IPIIIISAIVLLLVIN). Residues 413–419 (NRNNTIN) lie on the Cytoplasmic side of the membrane.

As to quaternary structure, homodimer.

The protein localises to the cell inner membrane. It carries out the reaction a lipid-linked O antigen + a lipid A-core oligosaccharide = a lipopolysaccharide + a polyisoprenyl diphosphate.. It participates in bacterial outer membrane biogenesis; lipopolysaccharide biosynthesis. With respect to regulation, activity does not require ATP and magnesium ions. Functionally, transferase involved in the biosynthesis of the lipopolysaccharide (LPS). In vitro, catalyzes the transfer of a polymerized O-antigen molecule from its polyprenyl diphosphate membrane anchor to a terminal sugar of the lipid A-core oligosaccharide, finalizing the biosynthesis of the lipopolysaccharide. The enzyme is functional and can be used to give diverse hybrid O-antigens in vitro, but K12 strains do not produce the O-antigen in vivo due to mutations in the rfb gene cluster. K12 strains are phenotypically rough, their lipopolysaccharide having a complete core structure, but no O-antigen. In highly mucoid K12 strains, WaaL can ligate colanic acid (CA or M-antigen) repeats to a significant proportion of lipopolysaccharide (LPS) core acceptor molecules, forming the LPS glycoform M(LPS). The attachment point was identified as O-7 of the L-glycero-D-manno-heptose of the outer LPS core, the same position used for O-antigen ligation. Cannot catalyze ATP hydrolysis in vitro. This Escherichia coli (strain K12) protein is O-antigen ligase.